A 220-amino-acid chain; its full sequence is 7-cyano-7-deazaguanine synthase (220 aa).

11 to 21 (VSGGMDSVTLM) is a binding site for ATP. Zn(2+)-binding residues include Cys-186, Cys-194, Cys-197, and Cys-200.

This sequence belongs to the QueC family. It depends on Zn(2+) as a cofactor.

It catalyses the reaction 7-carboxy-7-deazaguanine + NH4(+) + ATP = 7-cyano-7-deazaguanine + ADP + phosphate + H2O + H(+). The protein operates within purine metabolism; 7-cyano-7-deazaguanine biosynthesis. Functionally, catalyzes the ATP-dependent conversion of 7-carboxy-7-deazaguanine (CDG) to 7-cyano-7-deazaguanine (preQ(0)). In Porphyromonas gingivalis (strain ATCC BAA-308 / W83), this protein is 7-cyano-7-deazaguanine synthase.